The following is a 415-amino-acid chain: Imidazolonepropionase (415 aa).

2 residues coordinate Fe(3+): histidine 83 and histidine 85. Zn(2+)-binding residues include histidine 83 and histidine 85. 4-imidazolone-5-propanoate-binding residues include arginine 92, tyrosine 155, and histidine 188. Tyrosine 155 is a binding site for N-formimidoyl-L-glutamate. Histidine 250 is a Fe(3+) binding site. Residue histidine 250 participates in Zn(2+) binding. Glutamine 253 is a 4-imidazolone-5-propanoate binding site. Aspartate 324 provides a ligand contact to Fe(3+). A Zn(2+)-binding site is contributed by aspartate 324. Residues asparagine 326 and glycine 328 each contribute to the N-formimidoyl-L-glutamate site. A 4-imidazolone-5-propanoate-binding site is contributed by serine 329.

This sequence belongs to the metallo-dependent hydrolases superfamily. HutI family. Zn(2+) is required as a cofactor. Requires Fe(3+) as cofactor.

Its subcellular location is the cytoplasm. The catalysed reaction is 4-imidazolone-5-propanoate + H2O = N-formimidoyl-L-glutamate. The protein operates within amino-acid degradation; L-histidine degradation into L-glutamate; N-formimidoyl-L-glutamate from L-histidine: step 3/3. Functionally, catalyzes the hydrolytic cleavage of the carbon-nitrogen bond in imidazolone-5-propanoate to yield N-formimidoyl-L-glutamate. It is the third step in the universal histidine degradation pathway. This chain is Imidazolonepropionase, found in Rubrobacter xylanophilus (strain DSM 9941 / JCM 11954 / NBRC 16129 / PRD-1).